The chain runs to 116 residues: NADH-ubiquinone oxidoreductase chain 3 (116 aa).

The next 3 membrane-spanning stretches (helical) occupy residues 4–24 (FMVMIMLTLTLSSIMALLAFW), 56–76 (FFLVAILFLLFDLEIALLLPS), and 87–107 (FTLLWASLFVLLLTLGLIYEW).

Belongs to the complex I subunit 3 family.

It is found in the mitochondrion membrane. It catalyses the reaction a ubiquinone + NADH + 5 H(+)(in) = a ubiquinol + NAD(+) + 4 H(+)(out). Functionally, core subunit of the mitochondrial membrane respiratory chain NADH dehydrogenase (Complex I) that is believed to belong to the minimal assembly required for catalysis. Complex I functions in the transfer of electrons from NADH to the respiratory chain. The immediate electron acceptor for the enzyme is believed to be ubiquinone. In Petromyzon marinus (Sea lamprey), this protein is NADH-ubiquinone oxidoreductase chain 3 (MT-ND3).